A 189-amino-acid chain; its full sequence is Inner membrane-spanning protein YciB (189 aa).

The next 5 membrane-spanning stretches (helical) occupy residues Leu-3–Tyr-23, Ile-47–Leu-67, Trp-76–Phe-96, Trp-121–Phe-141, and Phe-149–Leu-169.

The protein belongs to the YciB family.

Its subcellular location is the cell inner membrane. In terms of biological role, plays a role in cell envelope biogenesis, maintenance of cell envelope integrity and membrane homeostasis. This is Inner membrane-spanning protein YciB from Paracidovorax citrulli (strain AAC00-1) (Acidovorax citrulli).